A 731-amino-acid polypeptide reads, in one-letter code: Pre-B-cell leukemia transcription factor-interacting protein 1 (731 aa).

Over residues 1–10 (MASCPDSDNS) the composition is skewed to polar residues. The interval 1–155 (MASCPDSDNS…SSSDDDTDVD (155 aa)) is disordered. Ser-43 is subject to Phosphoserine. Composition is skewed to polar residues over residues 62 to 75 (LFQTESPQSGSILT) and 121 to 132 (LEGQSPPQSLPS). Ser-129, Ser-146, Ser-147, and Ser-148 each carry phosphoserine. Thr-152 carries the phosphothreonine modification. Residues 270–348 (LLLDKLAKEN…QGLEADCVRG (79 aa)) adopt a coiled-coil conformation. Disordered regions lie at residues 354–377 (LSGGRGPQGDKAIREQGPREQEPE), 447–572 (GQDP…DPLP), and 698–731 (LKKRSGKKDKHSQSPRAAGPREGHSHSHHHHHRG). Basic and acidic residues predominate over residues 364-375 (KAIREQGPREQE). Positions 377–417 (ELSFLKQKEQLEAEAQALRQELERQRRLLGSVQQDLERSLQ) form a coiled coil. Composition is skewed to basic and acidic residues over residues 472-499 (WSGKEKWWDGQRDRKAEHWKHKKEESGR), 508-543 (QEDREPAGRWKEGRPRVEESGSKKEGKRQGPKEPPR), and 551-569 (SGEKQKQPRWREGTKDSHD). A Nuclear localization signal motif is present at residues 485 to 505 (RKAEHWKHKKEESGRERKKNW). Ser-567 carries the post-translational modification Phosphoserine. The short motif at 695-720 (DKALKKRSGKKDKHSQSPRAAGPREG) is the Nuclear localization signal element. A compositionally biased stretch (basic residues) spans 698-707 (LKKRSGKKDK).

Interacts with TEX11. Interacts with ESR1, PBX1, PBX2 and PBX3. As to expression, expressed in early hematopoietic precursors.

It is found in the cytoplasm. The protein localises to the cytoskeleton. The protein resides in the nucleus. Regulator of pre-B-cell leukemia transcription factors (BPXs) function. Inhibits the binding of PBX1-HOX complex to DNA and blocks the transcriptional activity of E2A-PBX1. Tethers estrogen receptor-alpha (ESR1) to microtubules and allows them to influence estrogen receptors-alpha signaling. The protein is Pre-B-cell leukemia transcription factor-interacting protein 1 (PBXIP1) of Homo sapiens (Human).